Consider the following 727-residue polypeptide: Sodium-dependent neutral amino acid transporter SLC6A17 (727 aa).

At methionine 1 to tyrosine 69 the chain is on the cytoplasmic side. Residues serine 13 and serine 20 each carry the phosphoserine modification. The chain crosses the membrane as a helical span at residues isoleucine 70–cysteine 90. Residues glutamine 91–glycine 95 lie on the Extracellular side of the membrane. Residues glycine 96–leucine 116 traverse the membrane as a helical segment. Over glutamate 117–cysteine 147 the chain is Cytoplasmic. Residues isoleucine 148–phenylalanine 168 traverse the membrane as a helical segment. At phenylalanine 169–glycine 222 the chain is on the extracellular side. The N-linked (GlcNAc...) asparagine glycan is linked to asparagine 186. The chain crosses the membrane as a helical span at residues leucine 223–valine 243. Topologically, residues lysine 244 to methionine 253 are cytoplasmic. The helical transmembrane segment at tyrosine 254 to leucine 274 threads the bilayer. Residues arginine 275 to glutamate 300 are Extracellular-facing. The helical transmembrane segment at alanine 301–serine 321 threads the bilayer. The Cytoplasmic portion of the chain corresponds to tyrosine 322–alanine 334. The helical transmembrane segment at leucine 335–leucine 355 threads the bilayer. The Extracellular portion of the chain corresponds to glycine 356 to valine 460. Tyrosine 377 bears the Phosphotyrosine mark. N-linked (GlcNAc...) asparagine glycosylation occurs at asparagine 393. A helical membrane pass occupies residues methionine 461 to isoleucine 481. Topologically, residues threonine 482 to lysine 490 are cytoplasmic. The helical transmembrane segment at valine 491 to phenylalanine 511 threads the bilayer. The Extracellular portion of the chain corresponds to valine 512–serine 527. A helical membrane pass occupies residues alanine 528–glycine 548. Topologically, residues threonine 549–lysine 573 are cytoplasmic. A helical membrane pass occupies residues phenylalanine 574–threonine 594. Topologically, residues proline 595 to alanine 617 are extracellular. The chain crosses the membrane as a helical span at residues methionine 618–leucine 638. Topologically, residues arginine 639–leucine 727 are cytoplasmic. Residues serine 665 and serine 701 each carry the phosphoserine modification. A disordered region spans residues valine 680–leucine 727. Positions glycine 698–proline 709 are enriched in polar residues.

Belongs to the sodium:neurotransmitter symporter (SNF) (TC 2.A.22) family.

It is found in the cytoplasmic vesicle. The protein resides in the secretory vesicle. It localises to the synaptic vesicle membrane. The protein localises to the postsynapse. Its subcellular location is the presynapse. The catalysed reaction is L-proline(in) + Na(+)(in) = L-proline(out) + Na(+)(out). It carries out the reaction L-leucine(in) + Na(+)(in) = L-leucine(out) + Na(+)(out). The enzyme catalyses glycine(in) + Na(+)(in) = glycine(out) + Na(+)(out). It catalyses the reaction L-alanine(in) + Na(+)(in) = L-alanine(out) + Na(+)(out). The catalysed reaction is L-glutamine(in) + Na(+)(in) = L-glutamine(out) + Na(+)(out). In terms of biological role, synaptic vesicle transporter with apparent selectivity for neutral amino acids. The transport is sodium-coupled but chloride-independent, likely driven by the proton electrochemical gradient generated by vacuolar H(+)-ATPase in an overall electrogenic mechanism. May contribute to the synaptic uptake of neurotransmitter precursors in a process coupled in part to vesicle exocytosis. The chain is Sodium-dependent neutral amino acid transporter SLC6A17 from Homo sapiens (Human).